Here is a 290-residue protein sequence, read N- to C-terminus: Ribonuclease 3 (290 aa).

Residues 20–145 (YSCFYRILGF…FIGAIYLDRG (126 aa)) enclose the RNase III domain. Mg(2+) is bound at residue E62. Residue D66 is part of the active site. Mg(2+) contacts are provided by N131 and E134. E134 is an active-site residue. The region spanning 173–242 (NFKSKLIEWS…AQMTLKKIKG (70 aa)) is the DRBM domain. Residues 254-290 (KTQNNVPAEDTTPESETSLTAENQQIDEIISTEEISV) form a disordered region. Residues 267 to 279 (ESETSLTAENQQI) are compositionally biased toward polar residues.

This sequence belongs to the ribonuclease III family. Homodimer. Requires Mg(2+) as cofactor.

It is found in the cytoplasm. The enzyme catalyses Endonucleolytic cleavage to 5'-phosphomonoester.. In terms of biological role, digests double-stranded RNA. Involved in the processing of primary rRNA transcript to yield the immediate precursors to the large and small rRNAs (23S and 16S). Processes some mRNAs, and tRNAs when they are encoded in the rRNA operon. Processes pre-crRNA and tracrRNA of type II CRISPR loci if present in the organism. The sequence is that of Ribonuclease 3 from Bacteroides fragilis (strain ATCC 25285 / DSM 2151 / CCUG 4856 / JCM 11019 / LMG 10263 / NCTC 9343 / Onslow / VPI 2553 / EN-2).